The following is a 151-amino-acid chain: UPF0178 protein Desal_2673 (151 aa).

The protein belongs to the UPF0178 family.

The polypeptide is UPF0178 protein Desal_2673 (Maridesulfovibrio salexigens (strain ATCC 14822 / DSM 2638 / NCIMB 8403 / VKM B-1763) (Desulfovibrio salexigens)).